The primary structure comprises 443 residues: Methyl-coenzyme M reductase subunit beta (443 aa).

Tyr-367 provides a ligand contact to coenzyme M. A coenzyme B-binding site is contributed by Gly-369.

This sequence belongs to the methyl-coenzyme M reductase beta subunit family. MCR is a hexamer of two alpha, two beta, and two gamma chains, forming a dimer of heterotrimers. Coenzyme F430 is required as a cofactor.

It localises to the cytoplasm. The enzyme catalyses coenzyme B + methyl-coenzyme M = methane + coenzyme M-coenzyme B heterodisulfide. The protein operates within one-carbon metabolism; methyl-coenzyme M reduction; methane from methyl-coenzyme M: step 1/1. Component of the methyl-coenzyme M reductase (MCR) I that catalyzes the reductive cleavage of methyl-coenzyme M (CoM-S-CH3 or 2-(methylthio)ethanesulfonate) using coenzyme B (CoB or 7-mercaptoheptanoylthreonine phosphate) as reductant which results in the production of methane and the mixed heterodisulfide of CoB and CoM (CoM-S-S-CoB). This is the final step in methanogenesis. This chain is Methyl-coenzyme M reductase subunit beta (mcrB), found in Methanococcus voltae.